Reading from the N-terminus, the 146-residue chain is Hemoglobin subunit beta-1 (146 aa).

In terms of domain architecture, Globin spans Lys-2–Cys-146. His-63 and His-92 together coordinate heme b.

It belongs to the globin family. Heterotetramer of two alpha chains and two beta chains. As to expression, red blood cells.

Its function is as follows. Involved in oxygen transport from gills to the various peripheral tissues. This Lycodes reticulatus (Arctic eelpout) protein is Hemoglobin subunit beta-1.